The sequence spans 305 residues: Putative lipid kinase SAB0675c (305 aa).

A DAGKc domain is found at 3–139 (NKYTHGVLFY…YDVIKINNQY (137 aa)). ATP-binding positions include serine 44, 74 to 80 (GDGTVNE), and threonine 101. Mg(2+)-binding residues include serine 220, aspartate 223, and glutamate 225. The active-site Proton acceptor is the glutamate 281.

Belongs to the diacylglycerol/lipid kinase family. Mg(2+) serves as cofactor.

In terms of biological role, may catalyze the ATP-dependent phosphorylation of lipids other than diacylglycerol (DAG). The polypeptide is Putative lipid kinase SAB0675c (Staphylococcus aureus (strain bovine RF122 / ET3-1)).